Consider the following 359-residue polypeptide: 3-dehydroquinate synthase (359 aa).

NAD(+) contacts are provided by residues 72–77 (EGEIHK), 106–110 (GVIGD), 130–131 (TS), K143, K152, and 170–173 (CLKT). Residues E185, H248, and H264 each coordinate Zn(2+).

Belongs to the sugar phosphate cyclases superfamily. Dehydroquinate synthase family. Requires Co(2+) as cofactor. Zn(2+) serves as cofactor. It depends on NAD(+) as a cofactor.

Its subcellular location is the cytoplasm. It catalyses the reaction 7-phospho-2-dehydro-3-deoxy-D-arabino-heptonate = 3-dehydroquinate + phosphate. It participates in metabolic intermediate biosynthesis; chorismate biosynthesis; chorismate from D-erythrose 4-phosphate and phosphoenolpyruvate: step 2/7. Catalyzes the conversion of 3-deoxy-D-arabino-heptulosonate 7-phosphate (DAHP) to dehydroquinate (DHQ). The protein is 3-dehydroquinate synthase of Dehalococcoides mccartyi (strain ATCC BAA-2266 / KCTC 15142 / 195) (Dehalococcoides ethenogenes (strain 195)).